A 201-amino-acid chain; its full sequence is Peroxiredoxin 2 (201 aa).

A Thioredoxin domain is found at 3-156; that stretch reads VYLGKRAPDF…ILRSVKALQA (154 aa). Cysteine 44 functions as the Cysteine sulfenic acid (-SOH) intermediate in the catalytic mechanism. Position 119 (arginine 119) interacts with substrate.

This sequence belongs to the peroxiredoxin family. Prx6 subfamily. In terms of assembly, homodecamer. Pentamer of dimers that assemble into a ring structure.

The protein resides in the cytoplasm. It catalyses the reaction a hydroperoxide + [thioredoxin]-dithiol = an alcohol + [thioredoxin]-disulfide + H2O. Functionally, thiol-specific peroxidase that catalyzes the reduction of hydrogen peroxide and organic hydroperoxides to water and alcohols, respectively. Plays a role in cell protection against oxidative stress by detoxifying peroxides. This chain is Peroxiredoxin 2, found in Picrophilus torridus (strain ATCC 700027 / DSM 9790 / JCM 10055 / NBRC 100828 / KAW 2/3).